A 435-amino-acid chain; its full sequence is Maltodextrin transport system permease protein MalC (435 aa).

The next 10 membrane-spanning stretches (helical) occupy residues 34–54, 73–93, 130–150, 199–219, 230–250, 263–283, 294–314, 338–358, 371–391, and 404–424; these read GFIFLGVTIVFVLYFLALATP, FMLIRGAFHLIFVIVYVLFYF, YLLIIPSYVAMTFAIIFPVIV, IIWALAASTLQIVIGIFTAII, IFGVIFLLPWAVPAFITILTF, TQVLPILAKFLPFLDGALIPW, LIMMQGWLGFPYIYVLTLGIL, NITFPMILAVAAPTLISQYTF, GGGPGSVGGGAGSTDILISWI, and MAAAVTLIISIIVISISMIAF. The 229-residue stretch at 195–423 folds into the ABC transmembrane type-1 domain; sequence LSWTIIWALA…IIVISISMIA (229 aa).

This sequence belongs to the binding-protein-dependent transport system permease family. MalFG subfamily.

It is found in the cell membrane. Part of the binding-protein-dependent transport system for maltodextrin; probably responsible for the translocation of the substrate across the membrane. This chain is Maltodextrin transport system permease protein MalC (malC), found in Streptococcus pneumoniae serotype 4 (strain ATCC BAA-334 / TIGR4).